The chain runs to 217 residues: 3-demethoxyubiquinol 3-hydroxylase (217 aa).

The Fe cation site is built by Glu-66, Glu-96, His-99, Glu-148, Glu-180, and His-183.

Belongs to the COQ7 family. Requires Fe cation as cofactor.

Its subcellular location is the cell membrane. It catalyses the reaction a 5-methoxy-2-methyl-3-(all-trans-polyprenyl)benzene-1,4-diol + AH2 + O2 = a 3-demethylubiquinol + A + H2O. It participates in cofactor biosynthesis; ubiquinone biosynthesis. Functionally, catalyzes the hydroxylation of 2-nonaprenyl-3-methyl-6-methoxy-1,4-benzoquinol during ubiquinone biosynthesis. This is 3-demethoxyubiquinol 3-hydroxylase from Xanthomonas axonopodis pv. citri (strain 306).